A 106-amino-acid chain; its full sequence is Large ribosomal subunit protein uL24 (106 aa).

Residues 1–20 are disordered; it reads MNKRAKSKNREPLRKSPVKR. Residues 8–20 are compositionally biased toward basic and acidic residues; that stretch reads KNREPLRKSPVKR.

This sequence belongs to the universal ribosomal protein uL24 family. Part of the 50S ribosomal subunit.

Its function is as follows. One of two assembly initiator proteins, it binds directly to the 5'-end of the 23S rRNA, where it nucleates assembly of the 50S subunit. One of the proteins that surrounds the polypeptide exit tunnel on the outside of the subunit. The chain is Large ribosomal subunit protein uL24 from Methylacidiphilum infernorum (isolate V4) (Methylokorus infernorum (strain V4)).